The primary structure comprises 258 residues: Cyclohexa-1,5-dienecarbonyl-CoA hydratase (258 aa).

This sequence belongs to the enoyl-CoA hydratase/isomerase family.

It catalyses the reaction cyclohexa-1,5-diene-1-carbonyl-CoA + H2O = 6-hydroxycyclohex-1-ene-1-carbonyl-CoA. The protein operates within aromatic compound metabolism; benzoyl-CoA degradation. Catalyzes the hydration of cyclohexa-1,5-diene-1-carboxyl-CoA. The polypeptide is Cyclohexa-1,5-dienecarbonyl-CoA hydratase (dch) (Thauera aromatica).